The chain runs to 354 residues: Fructose-bisphosphate aldolase (354 aa).

Ser61 serves as a coordination point for D-glyceraldehyde 3-phosphate. Asp104 (proton donor) is an active-site residue. Zn(2+)-binding residues include His105, Asp139, Glu169, and His221. Gly222 lines the dihydroxyacetone phosphate pocket. A Zn(2+)-binding site is contributed by His260. Dihydroxyacetone phosphate contacts are provided by residues 261–263 (GGS) and 282–285 (NIDT).

The protein belongs to the class II fructose-bisphosphate aldolase family. As to quaternary structure, homodimer. The cofactor is Zn(2+).

It carries out the reaction beta-D-fructose 1,6-bisphosphate = D-glyceraldehyde 3-phosphate + dihydroxyacetone phosphate. It participates in carbohydrate degradation; glycolysis; D-glyceraldehyde 3-phosphate and glycerone phosphate from D-glucose: step 4/4. Catalyzes the aldol condensation of dihydroxyacetone phosphate (DHAP or glycerone-phosphate) with glyceraldehyde 3-phosphate (G3P) to form fructose 1,6-bisphosphate (FBP) in gluconeogenesis and the reverse reaction in glycolysis. This chain is Fructose-bisphosphate aldolase (fba), found in Campylobacter jejuni subsp. jejuni serotype O:23/36 (strain 81-176).